A 205-amino-acid chain; its full sequence is Helix-loop-helix protein 4 (205 aa).

Positions 3-16 are basic motif; sequence MVVAKRNARERTRV. The 54-residue stretch at 3-56 folds into the bHLH domain; the sequence is MVVAKRNARERTRVHTVNQAFLVLKQHLPSLRQFTKRVSKLRILNAAITYIDTL. The helix-loop-helix motif stretch occupies residues 17–56; sequence HTVNQAFLVLKQHLPSLRQFTKRVSKLRILNAAITYIDTL.

In terms of tissue distribution, expressed in the ADL sensory neurons.

The protein localises to the nucleus. In terms of biological role, acts as a transcriptional regulator. May mediate transcriptional activation by binding to the E-box motif 5'-CANNTG-3'. Required for the correct morphology, terminal identity and function of the ADL sensory neurons by controlling the expression of the ADL-specific gene repertoire, including chemoreceptor encoding genes, ion channel encoding genes, neuropeptides and the neurotransmitter eat-4. Regulates the expression of the srh-234 chemoreceptor encoding gene in the ADL neurons under feeding conditions. Plays a role in the chemorepulsive response toward ascaroside pheromones mediated by the ADL sensory neurons. The polypeptide is Helix-loop-helix protein 4 (hlh-4) (Caenorhabditis elegans).